The chain runs to 147 residues: MPPPQKIPSVRPFKQRKSLAIRQEEVAGIRAKFPNKIPVVVERYPRETFLPPLDKTKFLVPQELTMTQFLSIIRSRMVLRATEAFYLLVNNKSLVSMSATMAEIYRDYKDEDGFVYMTYASQETFGCLESAAPRDGSSLEDRPCNPL.

S93 and S96 each carry phosphoserine; by TBK1. A lipid anchor (Phosphatidylethanolamine amidated glycine; alternate) is attached at G126. The Phosphatidylserine amidated glycine; alternate moiety is linked to residue G126. A propeptide spans 127 to 147 (removed in mature form); the sequence is CLESAAPRDGSSLEDRPCNPL.

This sequence belongs to the ATG8 family. In terms of assembly, 3 different light chains, LC1 (a cleavage product of MAP1B), LC2 (a cleavage product of MAP1A) and LC3 (produced by one of the MAP1LC3 genes), can associate with the MAP1A or MAP1B heavy chains. Interacts with TP53INP1 and TP53INP2. Interacts with CALCOCO2. Interacts with TECPR2. Interacts with TBC1D5. Found in a complex with UBQLN1 and UBQLN2. Interacts with UBQLN4 (via STI1 1 and 2 domains). Interacts with UBQLN1 in the presence of UBQLN4. Interacts with TRIM5. Interacts with ATG13. Interacts with MEFV and TRIM21. Interacts with WDR81; recruits MAP1LC3C to ubiquitinated protein aggregates in the aggrephagy process. Interacts with MOAP1 (via LIR motif). Interacts with reticulophagy regulators RETREG1, RETREG2 and RETREG3. Interacts with TAX1BP1. Interacts with IRGM. Interacts with SPART. The precursor molecule is cleaved by ATG4 (ATG4A, ATG4B, ATG4C or ATG4D) to expose the glycine at the C-terminus and form the cytosolic form, LC3-I. The processed form is then activated by APG7L/ATG7, transferred to ATG3 and conjugated to phosphatidylethanolamine (PE) phospholipid to form the membrane-bound form, LC3-II. During non-canonical autophagy, the processed form is conjugated to phosphatidylserine (PS) phospholipid. ATG4 proteins also mediate the delipidation of PE-conjugated forms. In addition, ATG4B and ATG4D mediate delipidation of ATG8 proteins conjugated to PS during non-canonical autophagy. Post-translationally, (Microbial infection) The Legionella effector RavZ is a deconjugating enzyme that hydrolyzes the amide bond between the C-terminal glycine residue and an adjacent aromatic residue in ATG8 proteins conjugated to phosphatidylethanolamine (PE), producing an ATG8 protein that is resistant to reconjugation by the host machinery due to the cleavage of the reactive C-terminal glycine. RavZ is also able to mediate delipidation of ATG8 proteins conjugated to phosphatidylserine (PS). In terms of processing, phosphorylation at Ser-96 and Ser-98 by TBK1 prevents interaction with ATG4 (ATG4A, ATG4B, ATG4C or ATG4D). Phosphorylation by TBK1 on autophagosomes prevents their delipidation by ATG4 and premature removal from nascent autophagosomes. As to expression, most abundant in placenta, lung and ovary.

The protein resides in the cytoplasmic vesicle. It is found in the autophagosome membrane. It localises to the endomembrane system. The protein localises to the cytoplasm. Its subcellular location is the cytoskeleton. Its function is as follows. Ubiquitin-like modifier that plays a crucial role in antibacterial autophagy (xenophagy) through the selective binding of CALCOCO2. Recruits all ATG8 family members to infecting bacteria such as S.typhimurium. May also play a role in aggrephagy, the macroautophagic degradation of ubiquitinated and aggregated proteins. The protein is Microtubule-associated protein 1 light chain 3 gamma (MAP1LC3C) of Homo sapiens (Human).